Here is a 126-residue protein sequence, read N- to C-terminus: UPF0325 protein VFMJ11_2099 (126 aa).

This sequence belongs to the UPF0325 family.

This Aliivibrio fischeri (strain MJ11) (Vibrio fischeri) protein is UPF0325 protein VFMJ11_2099.